Consider the following 101-residue polypeptide: Ubiquitin-related modifier 1 homolog 1 (101 aa).

Gly101 is modified (1-thioglycine). Gly101 is covalently cross-linked (Glycyl lysine isopeptide (Gly-Lys) (interchain with K-? in acceptor proteins)).

The protein belongs to the URM1 family. In terms of processing, C-terminal thiocarboxylation occurs in 2 steps, it is first acyl-adenylated (-COAMP) via the hesA/moeB/thiF part of the MOCS3 homolog, then thiocarboxylated (-COSH) via the rhodanese domain of the MOCS3 homolog.

It is found in the cytoplasm. The protein operates within tRNA modification; 5-methoxycarbonylmethyl-2-thiouridine-tRNA biosynthesis. Acts as a sulfur carrier required for 2-thiolation of mcm(5)S(2)U at tRNA wobble positions of cytosolic tRNA(Lys), tRNA(Glu) and tRNA(Gln). Serves as sulfur donor in tRNA 2-thiolation reaction by being thiocarboxylated (-COSH) at its C-terminus by MOCS3. The sulfur is then transferred to tRNA to form 2-thiolation of mcm(5)S(2)U. Also acts as a ubiquitin-like protein (UBL) that is covalently conjugated via an isopeptide bond to lysine residues of target proteins. The thiocarboxylated form serves as substrate for conjugation and oxidative stress specifically induces the formation of UBL-protein conjugates. The sequence is that of Ubiquitin-related modifier 1 homolog 1 from Arabidopsis thaliana (Mouse-ear cress).